The sequence spans 327 residues: GMP reductase (327 aa).

C176 serves as the catalytic Thioimidate intermediate. I205–V228 provides a ligand contact to NADP(+).

This sequence belongs to the IMPDH/GMPR family. GuaC type 2 subfamily.

The enzyme catalyses IMP + NH4(+) + NADP(+) = GMP + NADPH + 2 H(+). In terms of biological role, catalyzes the irreversible NADPH-dependent deamination of GMP to IMP. It functions in the conversion of nucleobase, nucleoside and nucleotide derivatives of G to A nucleotides, and in maintaining the intracellular balance of A and G nucleotides. The protein is GMP reductase of Streptococcus pyogenes serotype M6 (strain ATCC BAA-946 / MGAS10394).